Reading from the N-terminus, the 477-residue chain is Peroxisome proliferator-activated receptor gamma (477 aa).

Ser87 is modified (phosphoserine; by MAPK). A DNA-binding region (nuclear receptor) is located at residues 110-184 (AIECRVCGDK…VGMSHNAIRF (75 aa)). 2 NR C4-type zinc fingers span residues 113–133 (CRVC…CEGC) and 150–172 (CDLN…FQKC). The interval 231-281 (TKAKAPGHPDGQSHRQNSRGYTRHELADDGGGSDQGAVREPRAEQGGGDSN) is disordered. The region spanning 252 to 475 (TRHELADDGG…HPLLQEIYKD (224 aa)) is the NR LBD domain. Residues 467–475 (PLLQEIYKD) carry the 9aaTAD motif.

This sequence belongs to the nuclear hormone receptor family. NR1 subfamily. Heterodimer with the retinoid X receptor. As to expression, expressed mainly in adipose tissue and kidney.

The protein localises to the nucleus. Its subcellular location is the cytoplasm. Its function is as follows. Receptor that binds peroxisome proliferators such as hypolipidemic drugs and fatty acids. Once activated by a ligand, the receptor binds to a promoter element in the gene for acyl-CoA oxidase and activates its transcription. It therefore controls the peroxisomal beta-oxidation pathway of fatty acids. Key regulator of adipocyte differentiation and glucose homeostasis. May play a role in the regulation of circadian rhythm. The polypeptide is Peroxisome proliferator-activated receptor gamma (pparg) (Xenopus laevis (African clawed frog)).